A 326-amino-acid chain; its full sequence is Beta-ketoacyl-[acyl-carrier-protein] synthase III (326 aa).

Catalysis depends on residues Cys120 and His253. Residues 254–258 form an ACP-binding region; the sequence is QANIR. Asn283 is a catalytic residue.

It belongs to the thiolase-like superfamily. FabH family. Homodimer.

Its subcellular location is the cytoplasm. The enzyme catalyses malonyl-[ACP] + acetyl-CoA + H(+) = 3-oxobutanoyl-[ACP] + CO2 + CoA. Its pathway is lipid metabolism; fatty acid biosynthesis. Its function is as follows. Catalyzes the condensation reaction of fatty acid synthesis by the addition to an acyl acceptor of two carbons from malonyl-ACP. Catalyzes the first condensation reaction which initiates fatty acid synthesis and may therefore play a role in governing the total rate of fatty acid production. Possesses both acetoacetyl-ACP synthase and acetyl transacylase activities. Its substrate specificity determines the biosynthesis of branched-chain and/or straight-chain of fatty acids. The chain is Beta-ketoacyl-[acyl-carrier-protein] synthase III from Ralstonia nicotianae (strain ATCC BAA-1114 / GMI1000) (Ralstonia solanacearum).